The sequence spans 254 residues: uncharacterized protein (254 aa).

Residues 6 to 239 (LSVDGVEFAY…NIKAVYGVDA (234 aa)) enclose the ABC transporter domain. 38 to 45 (GVNGAGKS) lines the ATP pocket.

It belongs to the ABC transporter superfamily.

This is an uncharacterized protein from Methanocaldococcus jannaschii (strain ATCC 43067 / DSM 2661 / JAL-1 / JCM 10045 / NBRC 100440) (Methanococcus jannaschii).